A 452-amino-acid polypeptide reads, in one-letter code: Bifunctional protein GlmU (452 aa).

The interval 1–232 is pyrophosphorylase; the sequence is MTTRTSLTIV…EDEVRGINTK (232 aa). UDP-N-acetyl-alpha-D-glucosamine contacts are provided by residues 11 to 14, lysine 25, glutamine 78, and 83 to 84; these read LAAG and GT. Aspartate 108 is a Mg(2+) binding site. UDP-N-acetyl-alpha-D-glucosamine is bound by residues glycine 144, glutamate 158, asparagine 173, and asparagine 230. Residue asparagine 230 coordinates Mg(2+). The tract at residues 233-253 is linker; the sequence is AQLAEAEAVMQTRLRQAAMTA. The segment at 254-452 is N-acetyltransferase; that stretch reads GVTLISPETI…SARARKPKTS (199 aa). The UDP-N-acetyl-alpha-D-glucosamine site is built by arginine 319 and lysine 337. Histidine 349 (proton acceptor) is an active-site residue. UDP-N-acetyl-alpha-D-glucosamine contacts are provided by tyrosine 352 and asparagine 363. Residues alanine 366, 372–373, serine 391, serine 409, and arginine 426 each bind acetyl-CoA; that span reads NY.

In the N-terminal section; belongs to the N-acetylglucosamine-1-phosphate uridyltransferase family. The protein in the C-terminal section; belongs to the transferase hexapeptide repeat family. As to quaternary structure, homotrimer. Mg(2+) serves as cofactor.

It is found in the cytoplasm. The enzyme catalyses alpha-D-glucosamine 1-phosphate + acetyl-CoA = N-acetyl-alpha-D-glucosamine 1-phosphate + CoA + H(+). It catalyses the reaction N-acetyl-alpha-D-glucosamine 1-phosphate + UTP + H(+) = UDP-N-acetyl-alpha-D-glucosamine + diphosphate. It functions in the pathway nucleotide-sugar biosynthesis; UDP-N-acetyl-alpha-D-glucosamine biosynthesis; N-acetyl-alpha-D-glucosamine 1-phosphate from alpha-D-glucosamine 6-phosphate (route II): step 2/2. It participates in nucleotide-sugar biosynthesis; UDP-N-acetyl-alpha-D-glucosamine biosynthesis; UDP-N-acetyl-alpha-D-glucosamine from N-acetyl-alpha-D-glucosamine 1-phosphate: step 1/1. Its pathway is bacterial outer membrane biogenesis; LPS lipid A biosynthesis. Functionally, catalyzes the last two sequential reactions in the de novo biosynthetic pathway for UDP-N-acetylglucosamine (UDP-GlcNAc). The C-terminal domain catalyzes the transfer of acetyl group from acetyl coenzyme A to glucosamine-1-phosphate (GlcN-1-P) to produce N-acetylglucosamine-1-phosphate (GlcNAc-1-P), which is converted into UDP-GlcNAc by the transfer of uridine 5-monophosphate (from uridine 5-triphosphate), a reaction catalyzed by the N-terminal domain. This Rhodopseudomonas palustris (strain BisB5) protein is Bifunctional protein GlmU.